A 352-amino-acid chain; its full sequence is Histidine biosynthesis bifunctional protein HisB (352 aa).

A histidinol-phosphatase region spans residues 1–164 (MSQKILFIDR…EIENEILSSF (164 aa)). Residue Asp9 is the Nucleophile of the active site. The Mg(2+) site is built by Asp9 and Asp11. Catalysis depends on Asp11, which acts as the Proton donor. 4 residues coordinate Zn(2+): Cys93, His95, Cys101, and Cys103. A Mg(2+)-binding site is contributed by Asp130. The imidazoleglycerol-phosphate dehydratase stretch occupies residues 165 to 352 (RSASYQRTTK…ENLASSKGVI (188 aa)).

The protein in the N-terminal section; belongs to the histidinol-phosphatase family. In the C-terminal section; belongs to the imidazoleglycerol-phosphate dehydratase family. Mg(2+) is required as a cofactor. It depends on Zn(2+) as a cofactor.

The protein localises to the cytoplasm. It catalyses the reaction D-erythro-1-(imidazol-4-yl)glycerol 3-phosphate = 3-(imidazol-4-yl)-2-oxopropyl phosphate + H2O. It carries out the reaction L-histidinol phosphate + H2O = L-histidinol + phosphate. Its pathway is amino-acid biosynthesis; L-histidine biosynthesis; L-histidine from 5-phospho-alpha-D-ribose 1-diphosphate: step 6/9. It functions in the pathway amino-acid biosynthesis; L-histidine biosynthesis; L-histidine from 5-phospho-alpha-D-ribose 1-diphosphate: step 8/9. The sequence is that of Histidine biosynthesis bifunctional protein HisB from Campylobacter jejuni subsp. jejuni serotype O:6 (strain 81116 / NCTC 11828).